The chain runs to 435 residues: D-amino acid dehydrogenase (435 aa).

Position 3-17 (3-17 (VLILGSGVIGTTSAW)) interacts with FAD.

The protein belongs to the DadA oxidoreductase family. FAD serves as cofactor.

The enzyme catalyses a D-alpha-amino acid + A + H2O = a 2-oxocarboxylate + AH2 + NH4(+). The protein operates within amino-acid degradation; D-alanine degradation; NH(3) and pyruvate from D-alanine: step 1/1. Oxidative deamination of D-amino acids. This Xylella fastidiosa (strain M12) protein is D-amino acid dehydrogenase.